We begin with the raw amino-acid sequence, 619 residues long: UPF0329 protein ECU01_0100/ECU01_1510/ECU08_0030 (619 aa).

A compositionally biased stretch (basic and acidic residues) spans 350 to 384; the sequence is REEREKREKREKREESKGRGKRGAGEAKEESKEED. The interval 350–428 is disordered; sequence REEREKREKR…GKRKGDGHHY (79 aa). The span at 385–399 shows a compositional bias: acidic residues; sequence GKEEEGVEAEEEESA. Residues 411 to 428 show a composition bias toward basic residues; it reads ARRKKSLKGKRKGDGHHY.

The protein belongs to the UPF0329 family.

This chain is UPF0329 protein ECU01_0100/ECU01_1510/ECU08_0030, found in Encephalitozoon cuniculi (strain GB-M1) (Microsporidian parasite).